The following is a 132-amino-acid chain: Small ribosomal subunit protein uS8 (132 aa).

The protein belongs to the universal ribosomal protein uS8 family. In terms of assembly, part of the 30S ribosomal subunit. Contacts proteins S5 and S12.

Functionally, one of the primary rRNA binding proteins, it binds directly to 16S rRNA central domain where it helps coordinate assembly of the platform of the 30S subunit. This is Small ribosomal subunit protein uS8 from Listeria innocua serovar 6a (strain ATCC BAA-680 / CLIP 11262).